A 67-amino-acid polypeptide reads, in one-letter code: Large ribosomal subunit protein bL31 (67 aa).

Zn(2+) is bound by residues C16, C18, C38, and C41.

Belongs to the bacterial ribosomal protein bL31 family. Type A subfamily. In terms of assembly, part of the 50S ribosomal subunit. Zn(2+) is required as a cofactor.

In terms of biological role, binds the 23S rRNA. This Thioalkalivibrio sulfidiphilus (strain HL-EbGR7) protein is Large ribosomal subunit protein bL31.